The following is a 159-amino-acid chain: SsrA-binding protein (159 aa).

This sequence belongs to the SmpB family.

The protein resides in the cytoplasm. Functionally, required for rescue of stalled ribosomes mediated by trans-translation. Binds to transfer-messenger RNA (tmRNA), required for stable association of tmRNA with ribosomes. tmRNA and SmpB together mimic tRNA shape, replacing the anticodon stem-loop with SmpB. tmRNA is encoded by the ssrA gene; the 2 termini fold to resemble tRNA(Ala) and it encodes a 'tag peptide', a short internal open reading frame. During trans-translation Ala-aminoacylated tmRNA acts like a tRNA, entering the A-site of stalled ribosomes, displacing the stalled mRNA. The ribosome then switches to translate the ORF on the tmRNA; the nascent peptide is terminated with the 'tag peptide' encoded by the tmRNA and targeted for degradation. The ribosome is freed to recommence translation, which seems to be the essential function of trans-translation. This chain is SsrA-binding protein, found in Acidiphilium cryptum (strain JF-5).